The following is a 186-amino-acid chain: Acetyltransferase PA5475 (186 aa).

An N-acetyltransferase domain is found at 31-186; sequence VLIRPLREED…STQVIHRLAL (156 aa). CoA contacts are provided by residues 117-119, Gly-125, Asn-156, and 161-163; these read VTI and DLC.

Catalyzes the transfer of an acetyl group from acetyl coenzyme A (AcCoA) to an acceptor substrate and releases both CoA and the acetylated product. It prefers the antibiotic chloramphenicol. The sequence is that of Acetyltransferase PA5475 from Pseudomonas aeruginosa (strain ATCC 15692 / DSM 22644 / CIP 104116 / JCM 14847 / LMG 12228 / 1C / PRS 101 / PAO1).